A 574-amino-acid polypeptide reads, in one-letter code: Phosphate permease PHO89 (574 aa).

At 1-5 (MALHQ) the chain is on the extracellular side. Residues 6-26 (FDYIFAIAMLFAFLDAFNIGA) form a helical membrane-spanning segment. Over 27–43 (NDVANSFASSISSRSLK) the chain is Cytoplasmic. A helical transmembrane segment spans residues 44–64 (YWQAMVLAGLCEFLGAVLAGA). Residues 65–84 (RVSGTIKNNIIDSSIFTNDP) are Extracellular-facing. The chain crosses the membrane as a helical span at residues 85 to 105 (AVLMLTMTSALIGSSCWLTFA). Topologically, residues 106-117 (TAIGMPVSTTHS) are cytoplasmic. Residues 118 to 138 (IVGGTIGAGIAAGGANGVVWG) traverse the membrane as a helical segment. The Extracellular segment spans residues 139-145 (WSGVSQI). A helical membrane pass occupies residues 146–166 (IASWFIAPILAGAIAAIVFSI). Residues 167–184 (SRFSVLEVKSLERSIKNA) lie on the Cytoplasmic side of the membrane. A helical membrane pass occupies residues 185 to 205 (LLLVGVLVFATFSILTMLIVW). Over 206–222 (KGSPNLHLDDLSETETA) the chain is Extracellular. A helical membrane pass occupies residues 223–243 (VSIVLTGAIASIVYFIFFYPF). At 244 to 354 (YRRKVLDQDW…SLLKQGPKKW (111 aa)) the chain is on the cytoplasmic side. The tract at residues 301-332 (EDEENKAASNSNDSVKNKEDIQEVDLVRTETE) is disordered. Over residues 315-332 (VKNKEDIQEVDLVRTETE) the composition is skewed to basic and acidic residues. The chain crosses the membrane as a helical span at residues 355–375 (PLLFWLVISHGWTQDVIHAQV). The Extracellular portion of the chain corresponds to 376 to 398 (NDRDMLSGDLKGMYERSKFYDNR). The chain crosses the membrane as a helical span at residues 399-419 (VEYIYSVLQAITAATMSFAHG). The Cytoplasmic portion of the chain corresponds to 420–447 (ANDVANATGPLSAVYVIWKTNTIGAKSE). The chain crosses the membrane as a helical span at residues 448-468 (VPVWVLAYGGVALVIGCWTYG). At 469 to 503 (YNIIKNLGNKMILQSPSRGFSIELAVAITTVMATQ) the chain is on the extracellular side. The chain crosses the membrane as a helical span at residues 504 to 524 (LGIPTSTTQIAVGGIVAVGLC). Topologically, residues 525–541 (NKDLKSVNWRMVAWCYS) are cytoplasmic. The helical transmembrane segment at 542–562 (GWFLTLPIAGLIAGIINGIIL) threads the bilayer. The Extracellular segment spans residues 563–574 (NAPRFGVEYQMT).

It belongs to the inorganic phosphate transporter (PiT) (TC 2.A.20) family. In terms of assembly, forms homodimers and higher order homooligomers.

The protein localises to the cell membrane. The enzyme catalyses 2 Na(+)(out) + phosphate(out) = 2 Na(+)(in) + phosphate(in). Weakly stimulated by Li(+) and K(+). Inhibited by monensin. Inhibited by phosphonoacetic acid. Inhibited by methylphosphonate. Inhibited by dimethylphosphonate. Functionally, sodium-phosphate symporter. Active in early growth phase. This is Phosphate permease PHO89 (PHO89) from Saccharomyces cerevisiae (strain ATCC 204508 / S288c) (Baker's yeast).